A 339-amino-acid polypeptide reads, in one-letter code: DNA-directed RNA polymerase subunit alpha (339 aa).

The interval 1–233 (MVREEVAGST…DLFLPFLHAE (233 aa)) is alpha N-terminal domain (alpha-NTD). The interval 264-339 (KKGIPLNYIF…IDLLKNKLSF (76 aa)) is alpha C-terminal domain (alpha-CTD).

The protein belongs to the RNA polymerase alpha chain family. As to quaternary structure, in plastids the minimal PEP RNA polymerase catalytic core is composed of four subunits: alpha, beta, beta', and beta''. When a (nuclear-encoded) sigma factor is associated with the core the holoenzyme is formed, which can initiate transcription.

The protein resides in the plastid. It localises to the chloroplast. It catalyses the reaction RNA(n) + a ribonucleoside 5'-triphosphate = RNA(n+1) + diphosphate. In terms of biological role, DNA-dependent RNA polymerase catalyzes the transcription of DNA into RNA using the four ribonucleoside triphosphates as substrates. This chain is DNA-directed RNA polymerase subunit alpha, found in Psathyrostachys rupestris (Hordeum rupestre).